The primary structure comprises 175 residues: Adenine phosphoribosyltransferase (175 aa).

This sequence belongs to the purine/pyrimidine phosphoribosyltransferase family. Homodimer.

Its subcellular location is the cytoplasm. It carries out the reaction AMP + diphosphate = 5-phospho-alpha-D-ribose 1-diphosphate + adenine. Its pathway is purine metabolism; AMP biosynthesis via salvage pathway; AMP from adenine: step 1/1. Functionally, catalyzes a salvage reaction resulting in the formation of AMP, that is energically less costly than de novo synthesis. In Clavibacter michiganensis subsp. michiganensis (strain NCPPB 382), this protein is Adenine phosphoribosyltransferase.